Consider the following 550-residue polypeptide: Acetyl-coenzyme A transporter 1 (550 aa).

Composition is skewed to basic and acidic residues over residues methionine 1–arginine 12 and aspartate 36–leucine 52. Positions methionine 1 to proline 58 are disordered. Residues methionine 1–serine 74 are Cytoplasmic-facing. Residue serine 42 is modified to Phosphoserine. Residues isoleucine 75–isoleucine 95 traverse the membrane as a helical segment. Topologically, residues proline 96–serine 113 are extracellular. Residue asparagine 103 is glycosylated (N-linked (GlcNAc...) asparagine). Residues phenylalanine 114–phenylalanine 134 form a helical membrane-spanning segment. At lysine 135–lysine 141 the chain is on the cytoplasmic side. A helical membrane pass occupies residues serine 142–valine 162. Over aspartate 163–aspartate 175 the chain is Extracellular. The helical transmembrane segment at valine 176–alanine 196 threads the bilayer. Over valine 197–asparagine 217 the chain is Cytoplasmic. A helical membrane pass occupies residues serine 218–alanine 238. Residues aspartate 239–threonine 256 are Extracellular-facing. The chain crosses the membrane as a helical span at residues leucine 257–leucine 277. Residues leucine 278–lysine 300 lie on the Cytoplasmic side of the membrane. Residues leucine 301–serine 321 form a helical membrane-spanning segment. At lysine 322–glutamate 344 the chain is on the extracellular side. The helical transmembrane segment at histidine 345–serine 365 threads the bilayer. Residues lysine 366–asparagine 375 lie on the Cytoplasmic side of the membrane. A helical transmembrane segment spans residues isoleucine 376–tryptophan 396. The Extracellular portion of the chain corresponds to tryptophan 397 to glycine 405. The helical transmembrane segment at glycine 406–leucine 426 threads the bilayer. Residues tyrosine 427 to aspartate 509 lie on the Cytoplasmic side of the membrane. Residues glycine 510–glycine 530 traverse the membrane as a helical segment. The Extracellular segment spans residues proline 531–asparagine 550.

Belongs to the SLC33A transporter family. Homodimerizes. Expressed in all adult tissues examined including brain, heart, kidney, liver and spleen, with maximum expression in liver and kidney.

The protein localises to the endoplasmic reticulum membrane. The catalysed reaction is acetyl-CoA(in) = acetyl-CoA(out). Functionally, acetyl-CoA transporter that mediates active acetyl-CoA import through the endoplasmic reticulum (ER) membrane into the ER lumen where specific ER-based acetyl-CoA:lysine acetyltransferases are responsible for the acetylation of ER-based protein substrate, such as BACE1. Necessary for O-acetylation of gangliosides. In Mus musculus (Mouse), this protein is Acetyl-coenzyme A transporter 1 (Slc33a1).